We begin with the raw amino-acid sequence, 1165 residues long: DNA-directed RNA polymerase subunit beta (1165 aa).

It belongs to the RNA polymerase beta chain family. In terms of assembly, the RNAP catalytic core consists of 2 alpha, 1 beta, 1 beta' and 1 omega subunit. When a sigma factor is associated with the core the holoenzyme is formed, which can initiate transcription.

It catalyses the reaction RNA(n) + a ribonucleoside 5'-triphosphate = RNA(n+1) + diphosphate. Its function is as follows. DNA-dependent RNA polymerase catalyzes the transcription of DNA into RNA using the four ribonucleoside triphosphates as substrates. The chain is DNA-directed RNA polymerase subunit beta from Corynebacterium glutamicum (strain R).